A 240-amino-acid polypeptide reads, in one-letter code: UDP-2,3-diacylglucosamine hydrolase (240 aa).

Mn(2+)-binding residues include aspartate 8, histidine 10, aspartate 41, asparagine 79, and histidine 114. 79-80 (NR) contributes to the substrate binding site. The substrate site is built by aspartate 122, serine 160, asparagine 164, lysine 167, and histidine 195. Histidine 195 and histidine 197 together coordinate Mn(2+).

It belongs to the LpxH family. Requires Mn(2+) as cofactor.

The protein localises to the cell inner membrane. Its subcellular location is the cytoplasm. The catalysed reaction is UDP-2-N,3-O-bis[(3R)-3-hydroxytetradecanoyl]-alpha-D-glucosamine + H2O = 2-N,3-O-bis[(3R)-3-hydroxytetradecanoyl]-alpha-D-glucosaminyl 1-phosphate + UMP + 2 H(+). It functions in the pathway glycolipid biosynthesis; lipid IV(A) biosynthesis; lipid IV(A) from (3R)-3-hydroxytetradecanoyl-[acyl-carrier-protein] and UDP-N-acetyl-alpha-D-glucosamine: step 4/6. Its activity is regulated as follows. Inhibited by a sulfonyl piperazine compound that shows antibacterial activity against E.coli; LpxH is the cellular target of this compound. Inhibited by 0.01% (or more) Triton X-100 in vitro. In terms of biological role, hydrolyzes the pyrophosphate bond of UDP-2,3-diacylglucosamine to yield 2,3-diacylglucosamine 1-phosphate (lipid X) and UMP by catalyzing the attack of water at the alpha-P atom. Involved in the biosynthesis of lipid A, a phosphorylated glycolipid that anchors the lipopolysaccharide to the outer membrane of the cell. Is essential for E.coli growth. Does not cleave the unacylated UDP-GlcNAc, the mono-acylated UDP-3-O-(R)-3-hydroxymyristoyl-GlcNAc, and CDP-diacylglycerol. The protein is UDP-2,3-diacylglucosamine hydrolase of Escherichia coli (strain K12).